The primary structure comprises 904 residues: Phosphoenolpyruvate carboxylase (904 aa).

The interval 52–71 (ISRRESDAPPSTLSEQLTGR) is disordered. Over residues 60-70 (PPSTLSEQLTG) the composition is skewed to polar residues. Residues histidine 151 and lysine 570 contribute to the active site.

The protein belongs to the PEPCase type 1 family. Requires Mg(2+) as cofactor.

It catalyses the reaction oxaloacetate + phosphate = phosphoenolpyruvate + hydrogencarbonate. Functionally, forms oxaloacetate, a four-carbon dicarboxylic acid source for the tricarboxylic acid cycle. This Xanthomonas euvesicatoria pv. vesicatoria (strain 85-10) (Xanthomonas campestris pv. vesicatoria) protein is Phosphoenolpyruvate carboxylase.